The following is a 140-amino-acid chain: Nucleoside diphosphate kinase (140 aa).

Positions 11, 59, 87, 93, 104, and 114 each coordinate ATP. His117 (pros-phosphohistidine intermediate) is an active-site residue.

The protein belongs to the NDK family. Homotetramer. Mg(2+) serves as cofactor.

It is found in the cytoplasm. It catalyses the reaction a 2'-deoxyribonucleoside 5'-diphosphate + ATP = a 2'-deoxyribonucleoside 5'-triphosphate + ADP. The enzyme catalyses a ribonucleoside 5'-diphosphate + ATP = a ribonucleoside 5'-triphosphate + ADP. Functionally, major role in the synthesis of nucleoside triphosphates other than ATP. The ATP gamma phosphate is transferred to the NDP beta phosphate via a ping-pong mechanism, using a phosphorylated active-site intermediate. This is Nucleoside diphosphate kinase from Rhodopseudomonas palustris (strain HaA2).